Here is a 140-residue protein sequence, read N- to C-terminus: NADPH-dependent 7-cyano-7-deazaguanine reductase (140 aa).

Catalysis depends on Cys-51, which acts as the Thioimide intermediate. Residue Asp-58 is the Proton donor of the active site. Substrate contacts are provided by residues 73 to 75 (LES) and 92 to 93 (HE).

It belongs to the GTP cyclohydrolase I family. QueF type 1 subfamily.

It is found in the cytoplasm. The catalysed reaction is 7-aminomethyl-7-carbaguanine + 2 NADP(+) = 7-cyano-7-deazaguanine + 2 NADPH + 3 H(+). It participates in tRNA modification; tRNA-queuosine biosynthesis. Functionally, catalyzes the NADPH-dependent reduction of 7-cyano-7-deazaguanine (preQ0) to 7-aminomethyl-7-deazaguanine (preQ1). This Syntrophus aciditrophicus (strain SB) protein is NADPH-dependent 7-cyano-7-deazaguanine reductase.